Here is a 375-residue protein sequence, read N- to C-terminus: Succinyl-diaminopimelate desuccinylase (375 aa).

H66 lines the Zn(2+) pocket. Residue D68 is part of the active site. D99 serves as a coordination point for Zn(2+). E133 acts as the Proton acceptor in catalysis. 3 residues coordinate Zn(2+): E134, E162, and H348.

This sequence belongs to the peptidase M20A family. DapE subfamily. In terms of assembly, homodimer. It depends on Zn(2+) as a cofactor. Co(2+) serves as cofactor.

It carries out the reaction N-succinyl-(2S,6S)-2,6-diaminopimelate + H2O = (2S,6S)-2,6-diaminopimelate + succinate. It functions in the pathway amino-acid biosynthesis; L-lysine biosynthesis via DAP pathway; LL-2,6-diaminopimelate from (S)-tetrahydrodipicolinate (succinylase route): step 3/3. In terms of biological role, catalyzes the hydrolysis of N-succinyl-L,L-diaminopimelic acid (SDAP), forming succinate and LL-2,6-diaminopimelate (DAP), an intermediate involved in the bacterial biosynthesis of lysine and meso-diaminopimelic acid, an essential component of bacterial cell walls. This is Succinyl-diaminopimelate desuccinylase from Serratia proteamaculans (strain 568).